The chain runs to 877 residues: Protein SEY1 homolog (877 aa).

Over 1–735 the chain is Cytoplasmic; the sequence is MVAFAGGART…LRSIEGEKQN (735 aa). The 259-residue stretch at 49-307 folds into the GB1/RHD3-type G domain; the sequence is GITYHVVGVL…VPLDGIPSYL (259 aa). 59-66 serves as a coordination point for GTP; it reads GGQSSGKS. A coiled-coil region spans residues 388-410; it reads RIDIVRKTEAELEEELLKVELKL. Residues 736–756 traverse the membrane as a helical segment; sequence LPAWVLPVLLLLGWNEIWYVL. Residues 757 to 759 lie on the Lumenal side of the membrane; that stretch reads SSP. Residues 760-780 form a helical membrane-spanning segment; it reads VLLVVVVIIAAVFLRGFLLTQ. The Cytoplasmic portion of the chain corresponds to 781-877; sequence WAIFEETGPT…KEEEVPTQKE (97 aa). Residues 850-877 form a disordered region; that stretch reads PTVLPPSTTSATLTRRLKKEEEVPTQKE. The span at 867 to 877 shows a compositional bias: basic and acidic residues; it reads KKEEEVPTQKE.

It belongs to the TRAFAC class dynamin-like GTPase superfamily. GB1/RHD3 GTPase family. RHD3 subfamily.

It is found in the endoplasmic reticulum membrane. Its function is as follows. Probable GTP-binding protein that may be involved in cell development. The protein is Protein SEY1 homolog of Trypanosoma cruzi (strain CL Brener).